The chain runs to 105 residues: UPF0235 protein A1E_05380 (105 aa).

It belongs to the UPF0235 family.

In Rickettsia canadensis (strain McKiel), this protein is UPF0235 protein A1E_05380.